The sequence spans 413 residues: RNA-binding protein 41 (413 aa).

Residues 225 to 247 (SGSGTAEKPSLLQDKGKQAAQGK) form a disordered region. The region spanning 309–387 (KVLYLKNLSP…KILVIEFAKS (79 aa)) is the RRM domain.

Functionally, may bind RNA. The protein is RNA-binding protein 41 (Rbm41) of Mus musculus (Mouse).